We begin with the raw amino-acid sequence, 137 residues long: MAMVNTTTRLSDDALAFLSERHLAMLTTLRADNSPHVVAVGFTFDPKTHIARVITTGGSQKAVNADRSGLAVLSQVDGARWLSLEGRAAVNSDIDAVRDAELRYAQRYRTPRPNPRRVVIEVQIERVLGSADLLDRA.

Residues 36 to 41 (HVVAVG), 54 to 55 (IT), 60 to 61 (QK), R67, and 78 to 81 (GARW) contribute to the coenzyme F420-(gamma-Glu)n site.

This sequence belongs to the F420H(2)-dependent biliverdin reductase family. Homodimer.

Its subcellular location is the cell surface. The protein resides in the secreted. It catalyses the reaction (4Z,15Z)-bilirubin IXalpha + oxidized coenzyme F420-(gamma-L-Glu)(n) + H(+) = biliverdin IXalpha + reduced coenzyme F420-(gamma-L-Glu)(n). Catalyzes the F420H(2)-dependent reduction of biliverdin-IXalpha at C10 position, leading to bilirubin-IXalpha, a potent antioxidant. As biliverdin-IXalpha is produced in high amounts in macrophages infected with M.tuberculosis, its reduction by Rv2074 may play a role in protecting mycobacteria against oxidative stress, aiding the persistence of M.tuberculosis infection. In Mycobacterium tuberculosis (strain CDC 1551 / Oshkosh), this protein is F420H(2)-dependent biliverdin reductase.